The following is a 390-amino-acid chain: Alanine racemase (390 aa).

The active-site Proton acceptor; specific for D-alanine is the lysine 46. Lysine 46 is modified (N6-(pyridoxal phosphate)lysine). Arginine 144 is a substrate binding site. Tyrosine 275 acts as the Proton acceptor; specific for L-alanine in catalysis. Methionine 323 lines the substrate pocket.

Belongs to the alanine racemase family. Pyridoxal 5'-phosphate serves as cofactor.

It catalyses the reaction L-alanine = D-alanine. It functions in the pathway amino-acid biosynthesis; D-alanine biosynthesis; D-alanine from L-alanine: step 1/1. Its function is as follows. Catalyzes the interconversion of L-alanine and D-alanine. May also act on other amino acids. The polypeptide is Alanine racemase (alr) (Mycolicibacterium vanbaalenii (strain DSM 7251 / JCM 13017 / BCRC 16820 / KCTC 9966 / NRRL B-24157 / PYR-1) (Mycobacterium vanbaalenii)).